The chain runs to 236 residues: Large ribosomal subunit protein uL1 (236 aa).

This sequence belongs to the universal ribosomal protein uL1 family. In terms of assembly, part of the 50S ribosomal subunit.

Its function is as follows. Binds directly to 23S rRNA. The L1 stalk is quite mobile in the ribosome, and is involved in E site tRNA release. Protein L1 is also a translational repressor protein, it controls the translation of the L11 operon by binding to its mRNA. The sequence is that of Large ribosomal subunit protein uL1 from Acidobacterium capsulatum (strain ATCC 51196 / DSM 11244 / BCRC 80197 / JCM 7670 / NBRC 15755 / NCIMB 13165 / 161).